The following is a 187-amino-acid chain: Ras-like protein rasD (187 aa).

10-17 (GGGGVGKS) contributes to the GTP binding site. Residues 32–40 (YDPTIEDSY) carry the Effector region motif. Residues 57–61 (DTAGQ) and 116–119 (NKAD) contribute to the GTP site. At Cys184 the chain carries Cysteine methyl ester. A lipid anchor (S-geranylgeranyl cysteine) is attached at Cys184. The propeptide at 185-187 (LIL) is removed in mature form.

Belongs to the small GTPase superfamily. Ras family.

The protein resides in the cell membrane. The catalysed reaction is GTP + H2O = GDP + phosphate + H(+). With respect to regulation, alternates between an inactive form bound to GDP and an active form bound to GTP. Activated by a guanine nucleotide-exchange factor (GEF) and inactivated by a GTPase-activating protein (GAP). Its function is as follows. Ras proteins bind GDP/GTP and possess intrinsic GTPase activity. This Dictyostelium discoideum (Social amoeba) protein is Ras-like protein rasD (rasD).